The following is a 37-amino-acid chain: Large ribosomal subunit protein bL36 (37 aa).

Belongs to the bacterial ribosomal protein bL36 family.

This is Large ribosomal subunit protein bL36 from Synechococcus sp. (strain WH7803).